We begin with the raw amino-acid sequence, 89 residues long: Dolichol-phosphate mannose synthase subunit 3 (89 aa).

The next 2 helical transmembrane spans lie at 7–27 and 33–53; these read ILSL…AAII and WLLP…MVGV.

The protein belongs to the DPM3 family. As to quaternary structure, component of the dolichol-phosphate mannose (DPM) synthase complex composed of DPMS1, DPMS2 and DPMS3; in the complex interacts directly with DPMS1 and DPMS2.

Its subcellular location is the endoplasmic reticulum membrane. It participates in protein modification; protein glycosylation. In terms of biological role, regulates the biosynthesis of dolichol phosphate-mannose. Regulatory subunit of the dolichol-phosphate mannose (DPM) synthase complex; essential for the ER localization and stable expression of DPMS1. This Arabidopsis thaliana (Mouse-ear cress) protein is Dolichol-phosphate mannose synthase subunit 3.